Reading from the N-terminus, the 968-residue chain is RNA polymerase-associated protein RapA (968 aa).

Residues 164–334 (DVGRRHAPRV…FARLRLLDPN (171 aa)) enclose the Helicase ATP-binding domain. Residue 177–184 (DEVGLGKT) participates in ATP binding. The DEAH box signature appears at 280 to 283 (DEAH). One can recognise a Helicase C-terminal domain in the interval 490–685 (RVEWLMGYLT…ALKAQLEQGR (196 aa)).

It belongs to the SNF2/RAD54 helicase family. RapA subfamily. As to quaternary structure, interacts with the RNAP. Has a higher affinity for the core RNAP than for the holoenzyme. Its ATPase activity is stimulated by binding to RNAP.

In terms of biological role, transcription regulator that activates transcription by stimulating RNA polymerase (RNAP) recycling in case of stress conditions such as supercoiled DNA or high salt concentrations. Probably acts by releasing the RNAP, when it is trapped or immobilized on tightly supercoiled DNA. Does not activate transcription on linear DNA. Probably not involved in DNA repair. This chain is RNA polymerase-associated protein RapA, found in Salmonella typhimurium (strain LT2 / SGSC1412 / ATCC 700720).